The sequence spans 59 residues: Large ribosomal subunit protein bL32 (59 aa).

Belongs to the bacterial ribosomal protein bL32 family.

The sequence is that of Large ribosomal subunit protein bL32 from Rhizorhabdus wittichii (strain DSM 6014 / CCUG 31198 / JCM 15750 / NBRC 105917 / EY 4224 / RW1) (Sphingomonas wittichii).